The sequence spans 515 residues: Bifunctional purine biosynthesis protein PurH (515 aa).

The region spanning 1 to 145 is the MGS-like domain; it reads MTKRALISVS…KNHASVTVVV (145 aa).

Belongs to the PurH family.

It catalyses the reaction (6R)-10-formyltetrahydrofolate + 5-amino-1-(5-phospho-beta-D-ribosyl)imidazole-4-carboxamide = 5-formamido-1-(5-phospho-D-ribosyl)imidazole-4-carboxamide + (6S)-5,6,7,8-tetrahydrofolate. It carries out the reaction IMP + H2O = 5-formamido-1-(5-phospho-D-ribosyl)imidazole-4-carboxamide. It functions in the pathway purine metabolism; IMP biosynthesis via de novo pathway; 5-formamido-1-(5-phospho-D-ribosyl)imidazole-4-carboxamide from 5-amino-1-(5-phospho-D-ribosyl)imidazole-4-carboxamide (10-formyl THF route): step 1/1. Its pathway is purine metabolism; IMP biosynthesis via de novo pathway; IMP from 5-formamido-1-(5-phospho-D-ribosyl)imidazole-4-carboxamide: step 1/1. The protein is Bifunctional purine biosynthesis protein PurH of Streptococcus gordonii (strain Challis / ATCC 35105 / BCRC 15272 / CH1 / DL1 / V288).